The chain runs to 91 residues: DNA-directed RNA polymerase subunit omega (91 aa).

This sequence belongs to the RNA polymerase subunit omega family. The RNAP catalytic core consists of 2 alpha, 1 beta, 1 beta' and 1 omega subunit. When a sigma factor is associated with the core the holoenzyme is formed, which can initiate transcription.

It carries out the reaction RNA(n) + a ribonucleoside 5'-triphosphate = RNA(n+1) + diphosphate. In terms of biological role, promotes RNA polymerase assembly. Latches the N- and C-terminal regions of the beta' subunit thereby facilitating its interaction with the beta and alpha subunits. This is DNA-directed RNA polymerase subunit omega from Pseudoalteromonas translucida (strain TAC 125).